The sequence spans 249 residues: Isoprenyl transferase (249 aa).

Residue D25 is part of the active site. D25 provides a ligand contact to Mg(2+). Substrate contacts are provided by residues G26–R29, W30, R38, H42, and S70–E72. N73 functions as the Proton acceptor in the catalytic mechanism. Substrate contacts are provided by residues W74, R76, R197, and R203–S205. E216 provides a ligand contact to Mg(2+).

The protein belongs to the UPP synthase family. In terms of assembly, homodimer. Mg(2+) serves as cofactor.

Functionally, catalyzes the condensation of isopentenyl diphosphate (IPP) with allylic pyrophosphates generating different type of terpenoids. In Streptococcus thermophilus (strain CNRZ 1066), this protein is Isoprenyl transferase.